Consider the following 651-residue polypeptide: Mitogen-activated protein kinase kinase kinase 3 (651 aa).

The Protein kinase domain maps to 68-330 (WRKGELIGCG…ATELLQHPFV (263 aa)). Residues 74 to 82 (IGCGAFGRV) and Lys97 contribute to the ATP site. The stretch at 105 to 130 (SASKEKTQGHIRELEEEVQLLKNLSH) forms a coiled coil. Glycyl lysine isopeptide (Lys-Gly) (interchain with G-Cter in ubiquitin) cross-links involve residues Lys108 and Lys110. Residue Asp196 is the Proton acceptor of the active site. The segment at 573–608 (MPSPLKSSKRTLNTSRVMQSGTEPTQVNESTKKGVN) is disordered. Positions 582–608 (RTLNTSRVMQSGTEPTQVNESTKKGVN) are enriched in polar residues. A coiled-coil region spans residues 618 to 641 (RKWEEELYEELERHRENLRHAGAG).

The protein belongs to the protein kinase superfamily. STE Ser/Thr protein kinase family. MAP kinase kinase kinase subfamily. In terms of assembly, interacts with NACK2 and MKK6. In terms of tissue distribution, expressed in roots and flowers.

It localises to the cytoplasm. It is found in the cytoskeleton. The catalysed reaction is L-seryl-[protein] + ATP = O-phospho-L-seryl-[protein] + ADP + H(+). The enzyme catalyses L-threonyl-[protein] + ATP = O-phospho-L-threonyl-[protein] + ADP + H(+). Its function is as follows. Involved in cortical microtubules organization and stabilization by regulating the phosphorylation state of microtubule-associated proteins such as MAP65-1. The sequence is that of Mitogen-activated protein kinase kinase kinase 3 (ANP3) from Arabidopsis thaliana (Mouse-ear cress).